A 236-amino-acid chain; its full sequence is Small ribosomal subunit protein uS2c (236 aa).

This sequence belongs to the universal ribosomal protein uS2 family.

It localises to the plastid. Its subcellular location is the chloroplast. The chain is Small ribosomal subunit protein uS2c (rps2) from Eucalyptus globulus subsp. globulus (Tasmanian blue gum).